The chain runs to 505 residues: Bifunctional pantoate ligase/cytidylate kinase (505 aa).

The tract at residues 1 to 268 (MHQWRKHQQS…CGETRLIDHT (268 aa)) is pantoate--beta-alanine ligase. Residue 18 to 25 (MGALHRGH) coordinates ATP. H25 acts as the Proton donor in catalysis. Position 53 (Q53) interacts with (R)-pantoate. Residue Q53 coordinates beta-alanine. 142 to 145 (GEKD) is a binding site for ATP. Position 148 (Q148) interacts with (R)-pantoate. ATP contacts are provided by residues V171 and 179–182 (CSSR). A cytidylate kinase region spans residues 269–505 (FLMSRQPIVA…PEEVWPTAGR (237 aa)).

It in the N-terminal section; belongs to the pantothenate synthetase family. This sequence in the C-terminal section; belongs to the cytidylate kinase family. Type 1 subfamily.

The protein resides in the cytoplasm. It carries out the reaction (R)-pantoate + beta-alanine + ATP = (R)-pantothenate + AMP + diphosphate + H(+). The catalysed reaction is CMP + ATP = CDP + ADP. The enzyme catalyses dCMP + ATP = dCDP + ADP. Its pathway is cofactor biosynthesis; (R)-pantothenate biosynthesis; (R)-pantothenate from (R)-pantoate and beta-alanine: step 1/1. Functionally, catalyzes the condensation of pantoate with beta-alanine in an ATP-dependent reaction via a pantoyl-adenylate intermediate. In terms of biological role, catalyzes the transfer of a phosphate group from ATP to either CMP or dCMP to form CDP or dCDP and ADP, respectively. The protein is Bifunctional pantoate ligase/cytidylate kinase of Prochlorococcus marinus (strain MIT 9313).